Reading from the N-terminus, the 203-residue chain is Putative GPI-anchored protein YHR214W (203 aa).

The first 23 residues, 1–23 (MFNRFNKFQAAVALALLSRGALG), serve as a signal peptide directing secretion. Asparagine 28 and asparagine 138 each carry an N-linked (GlcNAc...) asparagine glycan. The GPI-anchor amidated asparagine moiety is linked to residue asparagine 184. A propeptide spans 185–203 (AGTFSLSNAILNGGSVSGL) (removed in mature form).

It localises to the cell membrane. The chain is Putative GPI-anchored protein YHR214W from Saccharomyces cerevisiae (strain ATCC 204508 / S288c) (Baker's yeast).